The primary structure comprises 428 residues: Peptidase B (428 aa).

Mn(2+)-binding residues include Lys195 and Asp200. Residue Lys207 is part of the active site. Asp218, Asp277, and Glu279 together coordinate Mn(2+). Residue Arg281 is part of the active site.

Belongs to the peptidase M17 family. In terms of assembly, homohexamer. Mn(2+) is required as a cofactor.

It localises to the cytoplasm. The enzyme catalyses Release of an N-terminal amino acid, Xaa, from a peptide or arylamide. Xaa is preferably Glu or Asp but may be other amino acids, including Leu, Met, His, Cys and Gln.. Functionally, probably plays an important role in intracellular peptide degradation. The chain is Peptidase B from Enterobacter sp. (strain 638).